Consider the following 200-residue polypeptide: MSKVLYIKANAKPEGVSRTFKISDSFIEEYRNQKPNDEIITLDLYKEGISFLTEEAIKLHVPKQGEGKDHHVLKYAYQFAEADKYVIAAPFWNLSFPAILKAYIDYICVTGITFKYTEEGAVGLCQGKKAVHIVSRGGGYSEGPFEMYEMGDRYLRTIFGFLGITDFTTIVAEKLDVVGEDVEGILRNTIEKAKEQAKEF.

135-138 (SRGG) is a binding site for FMN.

Belongs to the azoreductase type 1 family. Homodimer. FMN is required as a cofactor.

The enzyme catalyses 2 a quinone + NADH + H(+) = 2 a 1,4-benzosemiquinone + NAD(+). The catalysed reaction is N,N-dimethyl-1,4-phenylenediamine + anthranilate + 2 NAD(+) = 2-(4-dimethylaminophenyl)diazenylbenzoate + 2 NADH + 2 H(+). Functionally, quinone reductase that provides resistance to thiol-specific stress caused by electrophilic quinones. Its function is as follows. Also exhibits azoreductase activity. Catalyzes the reductive cleavage of the azo bond in aromatic azo compounds to the corresponding amines. The protein is FMN-dependent NADH:quinone oxidoreductase 2 of Clostridium acetobutylicum (strain ATCC 824 / DSM 792 / JCM 1419 / IAM 19013 / LMG 5710 / NBRC 13948 / NRRL B-527 / VKM B-1787 / 2291 / W).